Reading from the N-terminus, the 366-residue chain is Chorismate synthase (366 aa).

The NADP(+) site is built by arginine 48 and arginine 54. FMN is bound by residues 132 to 134 (RSS), 244 to 245 (NA), glycine 289, 304 to 308 (KPTSS), and arginine 330.

This sequence belongs to the chorismate synthase family. Homotetramer. FMNH2 is required as a cofactor.

The catalysed reaction is 5-O-(1-carboxyvinyl)-3-phosphoshikimate = chorismate + phosphate. The protein operates within metabolic intermediate biosynthesis; chorismate biosynthesis; chorismate from D-erythrose 4-phosphate and phosphoenolpyruvate: step 7/7. In terms of biological role, catalyzes the anti-1,4-elimination of the C-3 phosphate and the C-6 proR hydrogen from 5-enolpyruvylshikimate-3-phosphate (EPSP) to yield chorismate, which is the branch point compound that serves as the starting substrate for the three terminal pathways of aromatic amino acid biosynthesis. This reaction introduces a second double bond into the aromatic ring system. This chain is Chorismate synthase, found in Methylobacterium radiotolerans (strain ATCC 27329 / DSM 1819 / JCM 2831 / NBRC 15690 / NCIMB 10815 / 0-1).